The following is a 476-amino-acid chain: 3-isopropylmalate dehydratase large subunit (476 aa).

The [4Fe-4S] cluster site is built by C355, C416, and C419.

It belongs to the aconitase/IPM isomerase family. LeuC type 1 subfamily. As to quaternary structure, heterodimer of LeuC and LeuD. [4Fe-4S] cluster serves as cofactor.

The enzyme catalyses (2R,3S)-3-isopropylmalate = (2S)-2-isopropylmalate. It functions in the pathway amino-acid biosynthesis; L-leucine biosynthesis; L-leucine from 3-methyl-2-oxobutanoate: step 2/4. Catalyzes the isomerization between 2-isopropylmalate and 3-isopropylmalate, via the formation of 2-isopropylmaleate. The chain is 3-isopropylmalate dehydratase large subunit from Sphingopyxis alaskensis (strain DSM 13593 / LMG 18877 / RB2256) (Sphingomonas alaskensis).